The following is a 432-amino-acid chain: Enolase (432 aa).

Gln167 serves as a coordination point for (2R)-2-phosphoglycerate. The Proton donor role is filled by Glu209. 3 residues coordinate Mg(2+): Asp246, Glu290, and Asp317. (2R)-2-phosphoglycerate is bound by residues Lys342, Arg371, Ser372, and Lys393. Residue Lys342 is the Proton acceptor of the active site.

It belongs to the enolase family. As to quaternary structure, component of the RNA degradosome, a multiprotein complex involved in RNA processing and mRNA degradation. Mg(2+) serves as cofactor.

It localises to the cytoplasm. It is found in the secreted. Its subcellular location is the cell surface. The enzyme catalyses (2R)-2-phosphoglycerate = phosphoenolpyruvate + H2O. The protein operates within carbohydrate degradation; glycolysis; pyruvate from D-glyceraldehyde 3-phosphate: step 4/5. Its function is as follows. Catalyzes the reversible conversion of 2-phosphoglycerate (2-PG) into phosphoenolpyruvate (PEP). It is essential for the degradation of carbohydrates via glycolysis. This Cronobacter sakazakii (strain ATCC BAA-894) (Enterobacter sakazakii) protein is Enolase.